The chain runs to 321 residues: Ribonuclease Z (321 aa).

Positions 62, 64, 66, 67, 139, 209, and 268 each coordinate Zn(2+). Residue Asp66 is the Proton acceptor of the active site.

The protein belongs to the RNase Z family. Homodimer. Zn(2+) is required as a cofactor.

The catalysed reaction is Endonucleolytic cleavage of RNA, removing extra 3' nucleotides from tRNA precursor, generating 3' termini of tRNAs. A 3'-hydroxy group is left at the tRNA terminus and a 5'-phosphoryl group is left at the trailer molecule.. Its function is as follows. Zinc phosphodiesterase, which displays some tRNA 3'-processing endonuclease activity. Probably involved in tRNA maturation, by removing a 3'-trailer from precursor tRNA. In Pseudomonas putida (strain W619), this protein is Ribonuclease Z.